A 644-amino-acid chain; its full sequence is Translation factor guf1, mitochondrial (644 aa).

The transit peptide at 1-31 (MTLRRFSYTFQARILRGLQARPVFVLPSRSH) directs the protein to the mitochondrion. Residues 51-232 (VNIRNWAIIS…AIIQRVPHPI (182 aa)) form the tr-type G domain. Residues 60–67 (SHIDHGKS), 125–129 (DTPGH), and 179–182 (NKID) contribute to the GTP site.

The protein belongs to the TRAFAC class translation factor GTPase superfamily. Classic translation factor GTPase family. LepA subfamily.

It is found in the mitochondrion inner membrane. It carries out the reaction GTP + H2O = GDP + phosphate + H(+). In terms of biological role, promotes mitochondrial protein synthesis. May act as a fidelity factor of the translation reaction, by catalyzing a one-codon backward translocation of tRNAs on improperly translocated ribosomes. Binds to mitochondrial ribosomes in a GTP-dependent manner. In Schizosaccharomyces japonicus (strain yFS275 / FY16936) (Fission yeast), this protein is Translation factor guf1, mitochondrial (guf1).